A 292-amino-acid polypeptide reads, in one-letter code: Tissue factor (292 aa).

The signal sequence occupies residues 1-35; that stretch reads MATPNGPRVPCPQAAVARALLFGLVLIQGAGVAGT. The Extracellular portion of the chain corresponds to 36-248; sequence TDVVVAYNIT…TSHEKVLSTE (213 aa). An N-linked (GlcNAc...) asparagine glycan is attached at Asn43. A WKS motif motif is present at residues 46 to 48; it reads WKS. Cysteines 81 and 89 form a disulfide. Residues Asn153 and Asn181 are each glycosylated (N-linked (GlcNAc...) asparagine). Residues Cys215 and Cys238 are joined by a disulfide bond. The chain crosses the membrane as a helical span at residues 249–271; the sequence is LFFIIGTVMLVIIIFIVVLSVSL. The Cytoplasmic portion of the chain corresponds to 272-292; it reads HKCRKVRAERSGKENTPLNAA. Cys274 carries the S-palmitoyl cysteine lipid modification.

It belongs to the tissue factor family. Interacts with HSPE; the interaction, inhibited by heparin, promotes the generation of activated factor X and activates coagulation in the presence of activated factor VII.

Its subcellular location is the membrane. In terms of biological role, initiates blood coagulation by forming a complex with circulating factor VII or VIIa. The [TF:VIIa] complex activates factors IX or X by specific limited proteolysis. TF plays a role in normal hemostasis by initiating the cell-surface assembly and propagation of the coagulation protease cascade. The sequence is that of Tissue factor (F3) from Bos taurus (Bovine).